Consider the following 158-residue polypeptide: Pathogenesis-related protein 2 (158 aa).

This sequence belongs to the BetVI family.

In Petroselinum crispum (Parsley), this protein is Pathogenesis-related protein 2 (PR2).